The chain runs to 72 residues: Large ribosomal subunit protein bL32 (72 aa).

The protein belongs to the bacterial ribosomal protein bL32 family.

The sequence is that of Large ribosomal subunit protein bL32 from Dehalococcoides mccartyi (strain ATCC BAA-2266 / KCTC 15142 / 195) (Dehalococcoides ethenogenes (strain 195)).